The sequence spans 278 residues: Orotidine 5'-phosphate decarboxylase (278 aa).

Lys-95 functions as the Proton donor in the catalytic mechanism.

This sequence belongs to the OMP decarboxylase family. Type 2 subfamily.

The enzyme catalyses orotidine 5'-phosphate + H(+) = UMP + CO2. The protein operates within pyrimidine metabolism; UMP biosynthesis via de novo pathway; UMP from orotate: step 2/2. The chain is Orotidine 5'-phosphate decarboxylase from Methylibium petroleiphilum (strain ATCC BAA-1232 / LMG 22953 / PM1).